We begin with the raw amino-acid sequence, 373 residues long: WAT1-related protein At4g30420 (373 aa).

10 helical membrane-spanning segments follow: residues 2–22, 29–49, 55–75, 94–114, 125–145, 173–193, 205–225, 244–264, 270–290, and 294–314; these read AMTM…ATLV, VFIL…LYLS, IAIS…SLIG, MGSA…FLAG, GLAK…MTLL, WLIG…WLIL, LSLS…VTFF, CLYA…WAIA, FSAL…ALFF, and IYTG…TVLW. 2 consecutive EamA domains span residues 9-135 and 186-313; these read CYAG…TILC and CWSF…YTVL.

Belongs to the drug/metabolite transporter (DMT) superfamily. Plant drug/metabolite exporter (P-DME) (TC 2.A.7.4) family.

Its subcellular location is the membrane. This Arabidopsis thaliana (Mouse-ear cress) protein is WAT1-related protein At4g30420.